Reading from the N-terminus, the 410-residue chain is MSAKKLEGSSAPANRRDPYEVLCVSKDANDQEIKSAYRKLALKYHPDKNANNPDASELFKEVAFSYSILSDPEKRRHYDNAGFEALDADGMDMEIDLSNLGTVNTMFAALFSKLGVPIKTTVSANVLEEAMNGTVTVRPLPIGTSVSGKVEKQCAHFFGVTISEQQAESGVVVRVTSTAQSKFKLLYFEQDSSGGYGLALQEEREKTGKVTSAGMYFLHFQVYRMDTTVNALAAAKDPESAFFKRLEGLQPCEVSELKAGTHIFAVYGDNFFKTASYTIEALCAKTYEDTTEKLKEIEAQILRKRNELRQFETEYRKALARFQEVTNRYTQEKQTVDELLKQRDTIHSTFSVVKTPSGNNLSNGSSSKAQGDESKGDGDSAGEEGGTENRDKSKRKWFNLNLKGSDKKLG.

One can recognise a J domain in the interval 17–82 (DPYEVLCVSK…EKRRHYDNAG (66 aa)). Residues 284-344 (AKTYEDTTEK…TVDELLKQRD (61 aa)) are a coiled coil. The tract at residues 351 to 410 (SVVKTPSGNNLSNGSSSKAQGDESKGDGDSAGEEGGTENRDKSKRKWFNLNLKGSDKKLG) is disordered. Residues 357–367 (SGNNLSNGSSS) are compositionally biased toward low complexity.

Belongs to the DnaJ family. B/II subfamily. In terms of tissue distribution, expressed at high levels in root cap, root tip meristematic region and elongation zones, and at lower levels in mature part of roots (at protein level). Constitutively expressed in seedlings, etiolated or not, roots, rosette leaves, cauline leaves, stems, flowers, siliques and pollen.

The protein resides in the cytoplasm. It is found in the cytoskeleton. Its subcellular location is the endoplasmic reticulum membrane. It localises to the golgi apparatus membrane. Functionally, plays a continuous role in plant development probably in the structural organization of compartments. Seems to be involved in early gravitropic signal transduction within the gravity-perceiving cells (statocytes), where it influences pH changes and auxin distribution. Probably affects the localization and/or activity of auxin efflux carrier components (PIN proteins) or other proteins involved in lateral auxin transport. The sequence is that of Chaperone protein dnaJ 15 (ATJ15) from Arabidopsis thaliana (Mouse-ear cress).